We begin with the raw amino-acid sequence, 116 residues long: Calcium-regulated OB-fold protein CarO (116 aa).

The first 21 residues, 1-21 (MKLRHLPLIAAIGLFSTVTLA), serve as a signal peptide directing secretion.

The protein resides in the periplasm. In terms of biological role, plays a role in intracellular Ca(2+) homeostasis. Involved in cell protection against oxidative stress in strain 25W. The protein is Calcium-regulated OB-fold protein CarO of Pseudomonas aeruginosa (strain ATCC 15692 / DSM 22644 / CIP 104116 / JCM 14847 / LMG 12228 / 1C / PRS 101 / PAO1).